Reading from the N-terminus, the 294-residue chain is MKQKIFQILTALCCIFYVMSAQAIDAKKLYGLQGPKLIYQAPVTKSHHYVVKGVSYRTQTSKEASGYARDGIASFYHKKFNGRKTASGQIYNENLYTAAHKTLPLNSYVLVTNLRNQRKVIVRINDRGPFVKGRIIDLSRAAAREIGLIGSGVGHVRVELIQLDRQGRISGAASATLAKLAKNQEAVNMLLQGEDTVELTQHTEEKTVKAATTKPEKYTTVYKIRILNLDSKKQAEKLISKLGREDIRADITVNQDKFDIYFGPFSDKSQVNDVKAQLRKLNYSKPLIVYTFDD.

The first 23 residues, 1 to 23, serve as a signal peptide directing secretion; sequence MKQKIFQILTALCCIFYVMSAQA. The SPOR domain occupies 216 to 291; sequence EKYTTVYKIR…NYSKPLIVYT (76 aa).

The protein belongs to the RlpA family.

Its function is as follows. Lytic transglycosylase with a strong preference for naked glycan strands that lack stem peptides. In Pasteurella multocida (strain Pm70), this protein is Endolytic peptidoglycan transglycosylase RlpA.